We begin with the raw amino-acid sequence, 682 residues long: DNA-directed RNA polymerase subunit beta' (682 aa).

The Zn(2+) site is built by Cys69, Cys71, Cys87, and Cys90. Mg(2+)-binding residues include Asp489, Asp491, and Asp493.

This sequence belongs to the RNA polymerase beta' chain family. RpoC1 subfamily. In terms of assembly, in plastids the minimal PEP RNA polymerase catalytic core is composed of four subunits: alpha, beta, beta', and beta''. When a (nuclear-encoded) sigma factor is associated with the core the holoenzyme is formed, which can initiate transcription. Requires Mg(2+) as cofactor. The cofactor is Zn(2+).

The protein localises to the plastid. The protein resides in the chloroplast. It catalyses the reaction RNA(n) + a ribonucleoside 5'-triphosphate = RNA(n+1) + diphosphate. Its function is as follows. DNA-dependent RNA polymerase catalyzes the transcription of DNA into RNA using the four ribonucleoside triphosphates as substrates. The polypeptide is DNA-directed RNA polymerase subunit beta' (Vitis vinifera (Grape)).